The following is a 172-amino-acid chain: Photosystem I assembly protein Ycf3 (172 aa).

TPR repeat units lie at residues 35–68, 72–105, and 120–153; these read AFSY…EVDA, SYIL…NPSL, and GEQA…APTN.

Belongs to the Ycf3 family.

The protein resides in the plastid. It is found in the chloroplast thylakoid membrane. Functionally, essential for the assembly of the photosystem I (PSI) complex. May act as a chaperone-like factor to guide the assembly of the PSI subunits. This Chlamydomonas reinhardtii (Chlamydomonas smithii) protein is Photosystem I assembly protein Ycf3.